We begin with the raw amino-acid sequence, 110 residues long: Phosphoribosyl-ATP pyrophosphatase (110 aa).

This sequence belongs to the PRA-PH family.

It localises to the cytoplasm. The catalysed reaction is 1-(5-phospho-beta-D-ribosyl)-ATP + H2O = 1-(5-phospho-beta-D-ribosyl)-5'-AMP + diphosphate + H(+). It functions in the pathway amino-acid biosynthesis; L-histidine biosynthesis; L-histidine from 5-phospho-alpha-D-ribose 1-diphosphate: step 2/9. This Clostridium botulinum (strain Kyoto / Type A2) protein is Phosphoribosyl-ATP pyrophosphatase.